A 219-amino-acid chain; its full sequence is Adenylate kinase (219 aa).

Glycine 10 to threonine 15 provides a ligand contact to ATP. Residues serine 30–valine 59 are NMP. Residues threonine 31, arginine 36, glycine 57–valine 59, glycine 85–arginine 88, and glutamine 92 contribute to the AMP site. Positions glycine 122–aspartate 159 are LID. ATP is bound by residues arginine 123 and valine 132–tyrosine 133. Residues arginine 156 and arginine 167 each coordinate AMP. Residue arginine 202 coordinates ATP.

This sequence belongs to the adenylate kinase family. Monomer.

The protein localises to the cytoplasm. It carries out the reaction AMP + ATP = 2 ADP. It functions in the pathway purine metabolism; AMP biosynthesis via salvage pathway; AMP from ADP: step 1/1. In terms of biological role, catalyzes the reversible transfer of the terminal phosphate group between ATP and AMP. Plays an important role in cellular energy homeostasis and in adenine nucleotide metabolism. The chain is Adenylate kinase from Acinetobacter baylyi (strain ATCC 33305 / BD413 / ADP1).